Reading from the N-terminus, the 392-residue chain is Tryptophan synthase beta chain (392 aa).

Position 84 is an N6-(pyridoxal phosphate)lysine (Lys-84).

Belongs to the TrpB family. As to quaternary structure, tetramer of two alpha and two beta chains. Pyridoxal 5'-phosphate is required as a cofactor.

The enzyme catalyses (1S,2R)-1-C-(indol-3-yl)glycerol 3-phosphate + L-serine = D-glyceraldehyde 3-phosphate + L-tryptophan + H2O. It functions in the pathway amino-acid biosynthesis; L-tryptophan biosynthesis; L-tryptophan from chorismate: step 5/5. Functionally, the beta subunit is responsible for the synthesis of L-tryptophan from indole and L-serine. The chain is Tryptophan synthase beta chain (trpB) from Chlamydia trachomatis serovar D (strain ATCC VR-885 / DSM 19411 / UW-3/Cx).